The primary structure comprises 1065 residues: Pumilio domain-containing protein P35G2.14 (1065 aa).

Disordered stretches follow at residues 1–78 (MHQD…SLRS), 130–265 (ITSK…PWSP), and 422–573 (TTGF…NTNS). The span at 16-44 (RNTISKPSNNNPPLDMSSLNNDFGQQLDS) shows a compositional bias: polar residues. Low complexity predominate over residues 59 to 77 (NPSSNFNDSNRSNISSSLR). 2 stretches are compositionally biased toward polar residues: residues 134–151 (LQNNSNLSVTSSANRGRT) and 169–189 (SSVSSGKQHLSSLSLHTHFNP). Composition is skewed to low complexity over residues 190 to 224 (SSSSTVSSDSLESSQQKAPSSSSTATPASAASEII) and 236 to 246 (SASNAANSGSN). Polar residues-rich tracts occupy residues 247–262 (TIRARQTTRTRSNTLP) and 434–455 (GLNTSLFNTSSGGSLKSPTFEV). T260 carries the post-translational modification Phosphothreonine. Positions 470 to 483 (PLGSLSSRPKPSSS) are enriched in low complexity. Composition is skewed to polar residues over residues 495–522 (LKTSNPYMPSPSLLSGSLANSSEHSSSP) and 529–551 (IHNQPVSSSKSTASLNTNNNGLR). Phosphoserine occurs at positions 506, 511, and 515. T554 carries the phosphothreonine modification. Low complexity predominate over residues 559-573 (NISTRSSSESNNTNS). The RRM domain occupies 592-666 (HALWVGNLPS…DPVCISFAKV (75 aa)). Positions 712 to 1065 (DLSKIYQILN…ELKKLAEVCA (354 aa)) constitute a PUM-HD domain. Pumilio repeat units follow at residues 771-808 (AINWLDEVSDLSSDHLGNTVVQKLFDYCSDPVKEMMLE), 809-844 (RIAPHLAQIGIHKNGTWAAQKIVDVASTEAQMRLIA), 846-884 (HLQPYIPLLFADQFGNYVVQTCLKFGAPMNDFVFEAILN), 886-917 (FWVIAQSRYGSRAVRACLESPDVTEEQRVLVA), 919-954 (AITVYSVHLAMNGNGTLLLTYLVENMNYPHIPILLT), and 956-993 (RFVQDIVRVCTHRLAYNSLLKIISISQGDTACGDLVVD).

The protein localises to the cytoplasm. The sequence is that of Pumilio domain-containing protein P35G2.14 from Schizosaccharomyces pombe (strain 972 / ATCC 24843) (Fission yeast).